A 102-amino-acid chain; its full sequence is MEITKDTIKHVATLSRLAFNEEELDKFTDQMGSIINMADQLSEVDTEGVEETVQVVDRDTVFREDIPEHWQGQTRETLMENVPEKANGYIKVPVIINKDEDE.

This sequence belongs to the GatC family. Heterotrimer of A, B and C subunits.

The enzyme catalyses L-glutamyl-tRNA(Gln) + L-glutamine + ATP + H2O = L-glutaminyl-tRNA(Gln) + L-glutamate + ADP + phosphate + H(+). The catalysed reaction is L-aspartyl-tRNA(Asn) + L-glutamine + ATP + H2O = L-asparaginyl-tRNA(Asn) + L-glutamate + ADP + phosphate + 2 H(+). Its function is as follows. Allows the formation of correctly charged Asn-tRNA(Asn) or Gln-tRNA(Gln) through the transamidation of misacylated Asp-tRNA(Asn) or Glu-tRNA(Gln) in organisms which lack either or both of asparaginyl-tRNA or glutaminyl-tRNA synthetases. The reaction takes place in the presence of glutamine and ATP through an activated phospho-Asp-tRNA(Asn) or phospho-Glu-tRNA(Gln). The sequence is that of Aspartyl/glutamyl-tRNA(Asn/Gln) amidotransferase subunit C from Lactobacillus acidophilus (strain ATCC 700396 / NCK56 / N2 / NCFM).